The following is a 394-amino-acid chain: Phosphopentomutase (394 aa).

6 residues coordinate Mn(2+): Asp14, Asp287, His292, Asp328, His329, and His340.

This sequence belongs to the phosphopentomutase family. It depends on Mn(2+) as a cofactor.

The protein resides in the cytoplasm. The catalysed reaction is 2-deoxy-alpha-D-ribose 1-phosphate = 2-deoxy-D-ribose 5-phosphate. It catalyses the reaction alpha-D-ribose 1-phosphate = D-ribose 5-phosphate. It functions in the pathway carbohydrate degradation; 2-deoxy-D-ribose 1-phosphate degradation; D-glyceraldehyde 3-phosphate and acetaldehyde from 2-deoxy-alpha-D-ribose 1-phosphate: step 1/2. Its function is as follows. Isomerase that catalyzes the conversion of deoxy-ribose 1-phosphate (dRib-1-P) and ribose 1-phosphate (Rib-1-P) to deoxy-ribose 5-phosphate (dRib-5-P) and ribose 5-phosphate (Rib-5-P), respectively. This chain is Phosphopentomutase, found in Listeria innocua serovar 6a (strain ATCC BAA-680 / CLIP 11262).